The primary structure comprises 853 residues: uncharacterized protein (853 aa).

Over residues Met1–Lys11 the composition is skewed to basic residues. Disordered regions lie at residues Met1 to Val448, Ile485 to Asn621, and Glu635 to Glu658. A compositionally biased stretch (acidic residues) spans Ile20–Gly37. Basic residues predominate over residues Asn42 to Lys55. Residues Glu60–Glu74 show a composition bias toward acidic residues. A compositionally biased stretch (basic and acidic residues) spans Gly75–Lys87. Residues Lys88–His107 show a composition bias toward basic residues. A compositionally biased stretch (acidic residues) spans Glu112–Glu121. Positions Arg124–Asn139 are enriched in basic residues. 2 stretches are compositionally biased toward acidic residues: residues Glu143–Val166 and Asp179–Gln197. Residues Asp216–Arg228 show a composition bias toward basic residues. 2 stretches are compositionally biased toward acidic residues: residues Asp232 to Asn260 and Lys268 to Lys286. Basic and acidic residues-rich tracts occupy residues Gln287–Tyr361, Ser370–Tyr400, and Arg411–Ser425. 3 stretches are compositionally biased toward low complexity: residues Ser426–Asn447, Asn510–Ser613, and Asn636–Lys652.

This is an uncharacterized protein from Dictyostelium discoideum (Social amoeba).